The primary structure comprises 226 residues: Leucyl/phenylalanyl-tRNA--protein transferase (226 aa).

The protein belongs to the L/F-transferase family.

The protein resides in the cytoplasm. The catalysed reaction is N-terminal L-lysyl-[protein] + L-leucyl-tRNA(Leu) = N-terminal L-leucyl-L-lysyl-[protein] + tRNA(Leu) + H(+). It catalyses the reaction N-terminal L-arginyl-[protein] + L-leucyl-tRNA(Leu) = N-terminal L-leucyl-L-arginyl-[protein] + tRNA(Leu) + H(+). The enzyme catalyses L-phenylalanyl-tRNA(Phe) + an N-terminal L-alpha-aminoacyl-[protein] = an N-terminal L-phenylalanyl-L-alpha-aminoacyl-[protein] + tRNA(Phe). Functions in the N-end rule pathway of protein degradation where it conjugates Leu, Phe and, less efficiently, Met from aminoacyl-tRNAs to the N-termini of proteins containing an N-terminal arginine or lysine. This is Leucyl/phenylalanyl-tRNA--protein transferase from Pseudomonas putida (strain W619).